The chain runs to 447 residues: N-succinylarginine dihydrolase (447 aa).

Residues A19–S28, N110, and H137–R138 contribute to the substrate site. Residue E174 is part of the active site. Residue R212 coordinates substrate. H248 is an active-site residue. Positions 250 and 359 each coordinate substrate. C365 (nucleophile) is an active-site residue.

This sequence belongs to the succinylarginine dihydrolase family. In terms of assembly, homodimer.

It carries out the reaction N(2)-succinyl-L-arginine + 2 H2O + 2 H(+) = N(2)-succinyl-L-ornithine + 2 NH4(+) + CO2. It functions in the pathway amino-acid degradation; L-arginine degradation via AST pathway; L-glutamate and succinate from L-arginine: step 2/5. Its function is as follows. Catalyzes the hydrolysis of N(2)-succinylarginine into N(2)-succinylornithine, ammonia and CO(2). This Escherichia coli O157:H7 protein is N-succinylarginine dihydrolase.